Here is a 146-residue protein sequence, read N- to C-terminus: Large ribosomal subunit protein uL15 (146 aa).

Residues 1–13 (MKLHELKPAEGSR) are compositionally biased toward basic and acidic residues. Residues 1–51 (MKLHELKPAEGSRKVRNRVGRGTSSGNGKTSGRGQKGQKARSGGGVRLGFE) form a disordered region. 2 stretches are compositionally biased toward gly residues: residues 23–35 (TSSGNGKTSGRGQ) and 42–51 (SGGGVRLGFE).

Belongs to the universal ribosomal protein uL15 family. In terms of assembly, part of the 50S ribosomal subunit.

Binds to the 23S rRNA. This is Large ribosomal subunit protein uL15 from Streptococcus pneumoniae serotype 2 (strain D39 / NCTC 7466).